The chain runs to 1129 residues: Eukaryotic translation initiation factor 3 subunit A (1129 aa).

Residues 319–502 (LQRMAAHVLL…NSIYFGTDLT (184 aa)) form the PCI domain. 2 disordered regions span residues 590-633 (NNAR…NEIQ) and 836-1129 (AAEA…VKRR). 5 stretches are compositionally biased toward basic and acidic residues: residues 836–903 (AAEA…RSER), 923–964 (DRND…KDTD), 971–985 (WRVR…RERG), 994–1044 (GRDD…DQPQ), and 1053–1076 (DSPR…RDIR). Residues 1080–1091 (PKEGGGGGGGGN) are compositionally biased toward gly residues. The span at 1098–1119 (PRDEKPPVKRDQPQDKENKAGD) shows a compositional bias: basic and acidic residues.

The protein belongs to the eIF-3 subunit A family. In terms of assembly, component of the eukaryotic translation initiation factor 3 (eIF-3) complex. The eIF-3 complex interacts with pix.

It is found in the cytoplasm. Functionally, RNA-binding component of the eukaryotic translation initiation factor 3 (eIF-3) complex, which is involved in protein synthesis of a specialized repertoire of mRNAs and, together with other initiation factors, stimulates binding of mRNA and methionyl-tRNAi to the 40S ribosome. The eIF-3 complex specifically targets and initiates translation of a subset of mRNAs involved in cell proliferation. The polypeptide is Eukaryotic translation initiation factor 3 subunit A (Drosophila mojavensis (Fruit fly)).